The sequence spans 161 residues: Large-conductance mechanosensitive channel (161 aa).

Transmembrane regions (helical) follow at residues 21–41 and 79–99; these read VGVI…DGVI and GAFI…FLLV. Residues 142–154 show a composition bias toward low complexity; it reads TAAPKAAAAPVAK. Residues 142-161 are disordered; sequence TAAPKAAAAPVAKPKTKPKA.

Belongs to the MscL family. As to quaternary structure, homopentamer.

The protein resides in the cell inner membrane. Functionally, channel that opens in response to stretch forces in the membrane lipid bilayer. May participate in the regulation of osmotic pressure changes within the cell. The protein is Large-conductance mechanosensitive channel of Caulobacter sp. (strain K31).